The following is a 485-amino-acid chain: Hemolysin (485 aa).

The signal sequence occupies residues 1 to 28; that stretch reads MKNFKGRKFLTCVLVSLCTLNYSSISFA. 4 consecutive transmembrane segments (beta stranded) span residues 196–209, 216–225, 294–303, and 311–323; these read KAQI…NAKY, IDFNAVANGE, SKDVQAAFKA, and ETSG…FEES. A Conserved undecapeptide motif is present at residues 465–475; that stretch reads ECTGLAWEWWR.

The protein belongs to the cholesterol-dependent cytolysin family. In terms of assembly, homooligomeric pore complex of 35 to 50 subunits; when inserted in the host membrane.

The protein resides in the secreted. The protein localises to the host cell membrane. Its function is as follows. A cholesterol-dependent toxin with hemolytic activity against host red blood cells. Causes cytolysis by forming pores in cholesterol containing host membranes. binding to target membranes, the protein undergoes a major conformation change, leading to its insertion in the host membrane and formation of an oligomeric pore complex. Cholesterol is required for binding to host membranes, membrane insertion and pore formation; cholesterol binding is mediated by a Thr-Leu pair in the C-terminus. Can be reversibly inactivated by oxidation. This is Hemolysin from Bacillus cereus.